We begin with the raw amino-acid sequence, 376 residues long: Queuine tRNA-ribosyltransferase (376 aa).

Asp-90 serves as the catalytic Proton acceptor. Substrate contacts are provided by residues 90 to 94 (DSGGF), Asp-144, Gln-193, and Gly-220. The tract at residues 251–257 (GVGTPED) is RNA binding. The active-site Nucleophile is Asp-270. The RNA binding; important for wobble base 34 recognition stretch occupies residues 275–279 (TRNAR). Residues Cys-308, Cys-310, Cys-313, and His-339 each contribute to the Zn(2+) site.

It belongs to the queuine tRNA-ribosyltransferase family. Homodimer. Within each dimer, one monomer is responsible for RNA recognition and catalysis, while the other monomer binds to the replacement base PreQ1. Zn(2+) is required as a cofactor.

It catalyses the reaction 7-aminomethyl-7-carbaguanine + guanosine(34) in tRNA = 7-aminomethyl-7-carbaguanosine(34) in tRNA + guanine. It participates in tRNA modification; tRNA-queuosine biosynthesis. Its function is as follows. Catalyzes the base-exchange of a guanine (G) residue with the queuine precursor 7-aminomethyl-7-deazaguanine (PreQ1) at position 34 (anticodon wobble position) in tRNAs with GU(N) anticodons (tRNA-Asp, -Asn, -His and -Tyr). Catalysis occurs through a double-displacement mechanism. The nucleophile active site attacks the C1' of nucleotide 34 to detach the guanine base from the RNA, forming a covalent enzyme-RNA intermediate. The proton acceptor active site deprotonates the incoming PreQ1, allowing a nucleophilic attack on the C1' of the ribose to form the product. After dissociation, two additional enzymatic reactions on the tRNA convert PreQ1 to queuine (Q), resulting in the hypermodified nucleoside queuosine (7-(((4,5-cis-dihydroxy-2-cyclopenten-1-yl)amino)methyl)-7-deazaguanosine). This is Queuine tRNA-ribosyltransferase from Cupriavidus pinatubonensis (strain JMP 134 / LMG 1197) (Cupriavidus necator (strain JMP 134)).